The primary structure comprises 398 residues: Succinate--CoA ligase [ADP-forming] subunit beta (398 aa).

Residues 9–254 (KALLGEFGVP…ETEEDAKEIE (246 aa)) enclose the ATP-grasp domain. Residues lysine 46, 53 to 55 (GRG), glutamate 109, serine 112, and glutamate 117 contribute to the ATP site. Mg(2+)-binding residues include asparagine 209 and aspartate 223. Residues asparagine 274 and 331-333 (GIM) contribute to the substrate site.

This sequence belongs to the succinate/malate CoA ligase beta subunit family. As to quaternary structure, heterotetramer of two alpha and two beta subunits. Mg(2+) is required as a cofactor.

It carries out the reaction succinate + ATP + CoA = succinyl-CoA + ADP + phosphate. The catalysed reaction is GTP + succinate + CoA = succinyl-CoA + GDP + phosphate. It participates in carbohydrate metabolism; tricarboxylic acid cycle; succinate from succinyl-CoA (ligase route): step 1/1. In terms of biological role, succinyl-CoA synthetase functions in the citric acid cycle (TCA), coupling the hydrolysis of succinyl-CoA to the synthesis of either ATP or GTP and thus represents the only step of substrate-level phosphorylation in the TCA. The beta subunit provides nucleotide specificity of the enzyme and binds the substrate succinate, while the binding sites for coenzyme A and phosphate are found in the alpha subunit. The protein is Succinate--CoA ligase [ADP-forming] subunit beta of Bradyrhizobium diazoefficiens (strain JCM 10833 / BCRC 13528 / IAM 13628 / NBRC 14792 / USDA 110).